Here is a 163-residue protein sequence, read N- to C-terminus: Putative pre-16S rRNA nuclease (163 aa).

This sequence belongs to the YqgF nuclease family.

It localises to the cytoplasm. Could be a nuclease involved in processing of the 5'-end of pre-16S rRNA. In Rhizobium leguminosarum bv. trifolii (strain WSM2304), this protein is Putative pre-16S rRNA nuclease.